A 131-amino-acid chain; its full sequence is MNLIEKIEQEEVARLSANKVLPSFAPGDTVVVSVNVVEGTRKRTQAFEGVVIAKRNRGLNSSFIVRKISSGEGVERTFQTYSPLIASVEVKRRGDVRRAKLYYLRDRSGKSARIKEKLQARVKPTAAVAAE.

It belongs to the bacterial ribosomal protein bL19 family.

This protein is located at the 30S-50S ribosomal subunit interface and may play a role in the structure and function of the aminoacyl-tRNA binding site. The polypeptide is Large ribosomal subunit protein bL19 (Polynucleobacter necessarius subsp. necessarius (strain STIR1)).